Consider the following 71-residue polypeptide: Large ribosomal subunit protein bL31 (71 aa).

Residues Cys16, Cys18, Cys36, and Cys39 each contribute to the Zn(2+) site.

The protein belongs to the bacterial ribosomal protein bL31 family. Type A subfamily. As to quaternary structure, part of the 50S ribosomal subunit. Zn(2+) serves as cofactor.

Functionally, binds the 23S rRNA. This is Large ribosomal subunit protein bL31 from Thermus thermophilus (strain ATCC BAA-163 / DSM 7039 / HB27).